Consider the following 168-residue polypeptide: Diphosphoinositol polyphosphate phosphohydrolase 1 (168 aa).

An N-acetylmethionine modification is found at methionine 1. Residues arginine 10, 18–20 (KKR), and 39–41 (SSR) each bind substrate. Positions 17–144 (YKKRAACLCF…VQASYFETLR (128 aa)) constitute a Nudix hydrolase domain. Mg(2+)-binding residues include glycine 50 and glutamate 66. The Nudix box signature appears at 51 to 72 (GGMEPEEEPSVAAVREVCEEAG). Glutamate 69 serves as the catalytic Proton acceptor. Position 70 (glutamate 70) interacts with Mg(2+). Substrate is bound by residues 89–91 (RKH), arginine 115, and lysine 133.

It belongs to the Nudix hydrolase family. DIPP subfamily. In terms of assembly, monomer. It depends on Mg(2+) as a cofactor. Mn(2+) is required as a cofactor. Requires Zn(2+) as cofactor. As to expression, present in heart, lung, liver and spleen (at protein level). Widely expressed.

Its subcellular location is the cytoplasm. The protein resides in the nucleus. The catalysed reaction is diphospho-myo-inositol polyphosphate + H2O = myo-inositol polyphosphate + phosphate.. The enzyme catalyses 5-diphospho-1D-myo-inositol 1,2,3,4,6-pentakisphosphate + H2O = 1D-myo-inositol hexakisphosphate + phosphate + H(+). It carries out the reaction 3,5-bis(diphospho)-1D-myo-inositol 1,2,4,6-tetrakisphosphate + H2O = 3-diphospho-1D-myo-inositol 1,2,4,5,6-pentakisphosphate + phosphate + 2 H(+). It catalyses the reaction [phosphate](n+1) + n H2O = (n+1) phosphate + n H(+). The catalysed reaction is P(1),P(5)-bis(5'-adenosyl) pentaphosphate + H2O = ADP + ATP + 2 H(+). The enzyme catalyses P(1),P(6)-bis(5'-adenosyl) hexaphosphate + H2O = 2 ATP + 2 H(+). It carries out the reaction P(1),P(4)-bis(5'-adenosyl) tetraphosphate + H2O = AMP + ATP + 2 H(+). It catalyses the reaction a 5'-end (N(7)-methyl 5'-triphosphoguanosine)-ribonucleoside in mRNA + H2O = N(7)-methyl-GMP + a 5'-end diphospho-ribonucleoside in mRNA + 2 H(+). The catalysed reaction is a 5'-end (N(7)-methyl 5'-triphosphoguanosine)-ribonucleoside in mRNA + H2O = N(7)-methyl-GDP + a 5'-end phospho-ribonucleoside in mRNA + 2 H(+). Cleaves a beta-phosphate from the diphosphate groups in PP-InsP5 (diphosphoinositol pentakisphosphate) and [PP]2-InsP4 (bisdiphosphoinositol tetrakisphosphate), suggesting that it may play a role in signal transduction. InsP6 (inositol hexakisphosphate) is not a substrate. Also able to catalyze the hydrolysis of dinucleoside oligophosphates, with diadenosine 5',5'''-P1,P6-hexaphosphate (Ap6A) and diadenosine 5',5'''- P1,P5-pentaphosphate (Ap5A) being the preferred substrates. The major reaction products are ADP and p4a from Ap6A and ADP and ATP from Ap5A. Also able to hydrolyze 5- phosphoribose 1-diphosphate. Acts as a negative regulator of the ERK1/2 pathway. Acts as a decapping enzyme that can hydrolyze both monomethylated and unmethylated capped RNAs. Hydrolyzes monomethylated capped RNA after both the alpha- and beta-phosphates generating m7GMP + ppRNA and m7GDP + pRNA. Modulates the stability of a subset of mRNAs implicated in cell motility. Divalent cations zinc, magnesium and manganese determine its substrate specificity. Exhibits diphosphoinositol polyphosphate phosphohydrolase in the presence of magnesium ions, diadenosine hexaphosphate hydrolase activity in the presence of manganese ions and endopolyphosphatase activity in the presence of zinc ions. Plays an important role in limiting DNA damage and maintaining cell survival upon oxidative stress via its endopolyphosphatase activity. This chain is Diphosphoinositol polyphosphate phosphohydrolase 1, found in Mus musculus (Mouse).